Consider the following 388-residue polypeptide: Succinate--CoA ligase [ADP-forming] subunit beta (388 aa).

The 236-residue stretch at K9–Q244 folds into the ATP-grasp domain. Residues K46, G53–G55, E99, T102, and E107 each bind ATP. N199 and D213 together coordinate Mg(2+). Substrate is bound by residues N264 and G321–V323.

Belongs to the succinate/malate CoA ligase beta subunit family. In terms of assembly, heterotetramer of two alpha and two beta subunits. The cofactor is Mg(2+).

It catalyses the reaction succinate + ATP + CoA = succinyl-CoA + ADP + phosphate. The catalysed reaction is GTP + succinate + CoA = succinyl-CoA + GDP + phosphate. It functions in the pathway carbohydrate metabolism; tricarboxylic acid cycle; succinate from succinyl-CoA (ligase route): step 1/1. In terms of biological role, succinyl-CoA synthetase functions in the citric acid cycle (TCA), coupling the hydrolysis of succinyl-CoA to the synthesis of either ATP or GTP and thus represents the only step of substrate-level phosphorylation in the TCA. The beta subunit provides nucleotide specificity of the enzyme and binds the substrate succinate, while the binding sites for coenzyme A and phosphate are found in the alpha subunit. The chain is Succinate--CoA ligase [ADP-forming] subunit beta from Enterobacter sp. (strain 638).